The sequence spans 41 residues: Photosystem I reaction center subunit IX (41 aa).

Residues 7–27 (YLSTAPVLTLVSLTAVAGLLI) form a helical membrane-spanning segment.

The protein belongs to the PsaJ family.

It localises to the plastid. Its subcellular location is the chloroplast thylakoid membrane. In terms of biological role, may help in the organization of the PsaE and PsaF subunits. In Chlorella vulgaris (Green alga), this protein is Photosystem I reaction center subunit IX.